Here is a 517-residue protein sequence, read N- to C-terminus: DNA-(apurinic or apyrimidinic site) endonuclease 2 (517 aa).

Residues asparagine 9 and glutamate 34 each coordinate Mg(2+). The short motif at 82–90 (EEGLSGVFC) is the Claspin-like CKB motif element. Tyrosine 142 is a catalytic residue. Residues aspartate 183, asparagine 185, aspartate 299, and histidine 300 each coordinate Mg(2+). Catalysis depends on aspartate 183, which acts as the Proton donor/acceptor. Residue histidine 300 is the Proton acceptor of the active site. Over residues 347–362 (GNTTEESSELTGTPSF) the composition is skewed to polar residues. The interval 347–366 (GNTTEESSELTGTPSFTEGA) is disordered. Positions 395–402 (QGNLLSFF) match the PCNA interacting protein (PIP) box motif. Zn(2+) is bound by residues cysteine 463, histidine 466, cysteine 489, and cysteine 503. A GRF-type zinc finger spans residues 463-512 (CKGHSEPCVLRTVKKAGPNCGRQFYVCARPEGHSSNPQARCNFFLWLTKK).

It belongs to the DNA repair enzymes AP/ExoA family. Interacts (via PIP box and GRF-type Zinc finger domain) with pcna; the interaction is required for 3 -5 SSB end resection, assembly of a checkpoint protein complex to SSB sites, and SSB signaling. Interacts with chek1. The cofactor is Mg(2+). Mn(2+) is required as a cofactor. Expressed in eggs (at protein level).

The protein localises to the nucleus. Its subcellular location is the chromosome. It localises to the cytoplasm. The protein resides in the mitochondrion. It carries out the reaction Exonucleolytic cleavage in the 3'- to 5'-direction to yield nucleoside 5'-phosphates.. With respect to regulation, 3'-5' nuclease activity is stimulated in presence of pcna. Functionally, functions as a weak apurinic/apyrimidinic (AP) endodeoxyribonuclease in the DNA base excision repair (BER) pathway of DNA lesions induced by oxidative and alkylating agents. Initiates repair of AP sites in DNA by catalyzing hydrolytic incision of the phosphodiester backbone immediately adjacent to the damage, generating a single-strand break with 5'-deoxyribose phosphate and 3'-hydroxyl ends. Exhibits 3'-5' exonuclease activity on a 3' DNA substrate; nuclease activity is stimulated by interaction with pcna. Has a preference for the 3' recessed ends over blunt-ended substrates, in both the presence and the absence of pcna. Generates single-stranded DNA (ssDNA) via 3'-5' single-strand break (SSB) end resection, thereby promoting a DNA damage response via replication protein A (rpa2)-binding to ssDNA and the recruitment of a checkpoint protein complex, including atr, atr-interacting protein atrip, and rad9, to damage sites following oxidative stress. Plays a role in reversing blocked 3' DNA ends, problematic lesions that preclude DNA synthesis. Required for chek1 phosphorylation induced by hydrogen peroxide but not by stalled replication forks. The chain is DNA-(apurinic or apyrimidinic site) endonuclease 2 from Xenopus laevis (African clawed frog).